The following is a 185-amino-acid chain: uncharacterized protein (185 aa).

Met1 carries the N-acetylmethionine modification. Composition is skewed to basic and acidic residues over residues 1-18 (MDAF…QDKQ), 26-47 (TPSD…TTEE), and 59-71 (SNED…PVLE). 2 disordered regions span residues 1–71 (MDAF…PVLE) and 155–185 (DHDR…DGLL). Over residues 170 to 185 (LPEELETDQDFLDGLL) the composition is skewed to acidic residues.

This is an uncharacterized protein from Saccharomyces cerevisiae (strain ATCC 204508 / S288c) (Baker's yeast).